Reading from the N-terminus, the 363-residue chain is S-adenosylmethionine:tRNA ribosyltransferase-isomerase (363 aa).

This sequence belongs to the QueA family. Monomer.

The protein resides in the cytoplasm. The catalysed reaction is 7-aminomethyl-7-carbaguanosine(34) in tRNA + S-adenosyl-L-methionine = epoxyqueuosine(34) in tRNA + adenine + L-methionine + 2 H(+). It functions in the pathway tRNA modification; tRNA-queuosine biosynthesis. Its function is as follows. Transfers and isomerizes the ribose moiety from AdoMet to the 7-aminomethyl group of 7-deazaguanine (preQ1-tRNA) to give epoxyqueuosine (oQ-tRNA). The sequence is that of S-adenosylmethionine:tRNA ribosyltransferase-isomerase from Magnetococcus marinus (strain ATCC BAA-1437 / JCM 17883 / MC-1).